We begin with the raw amino-acid sequence, 138 residues long: Large ribosomal subunit protein bL17 (138 aa).

This sequence belongs to the bacterial ribosomal protein bL17 family. Part of the 50S ribosomal subunit. Contacts protein L32.

This is Large ribosomal subunit protein bL17 from Methylorubrum extorquens (strain CM4 / NCIMB 13688) (Methylobacterium extorquens).